We begin with the raw amino-acid sequence, 691 residues long: Lacticin-481/lactococcin-DR transport/processing ATP-binding protein lcnDR3 (691 aa).

The Peptidase C39 domain occupies Q6 to L130. C12 is an active-site residue. Residues T158–R434 enclose the ABC transmembrane type-1 domain. 5 helical membrane passes run F159 to L179, I189 to M209, G262 to L284, F289 to S311, and I385 to I405. The ABC transporter domain maps to I464–V689. ATP is bound at residue G497 to S504.

Belongs to the ABC transporter superfamily.

Its subcellular location is the cell membrane. Its function is as follows. Probably implicated in the export process of the lantibiotic lacticin-481/lactococcin-DR. The chain is Lacticin-481/lactococcin-DR transport/processing ATP-binding protein lcnDR3 (lcnDR3) from Lactococcus lactis subsp. lactis (Streptococcus lactis).